Reading from the N-terminus, the 109-residue chain is MSLITSGVLLTQSQDTLTFSVTTCQGLRLTKFASSTLKDARLKIVSQKEVNGKLRLTLGAGRYLYSIRISLETGTMQCLTTVLPSTVSVDTLPGTYLESTLQRQNQKSS.

This sequence belongs to the orthobunyavirus NS-S protein family.

Functionally, inhibits host transcriptional machinery, by producing modifications to the phosphorylation state of the C-terminal domain (CTD) of RNA polymerase II. Inhibits phosphorylation at serine 2 in the heptapeptide repeat (YSPTSPS) of the CTD of RNA polymerase II, suggesting that the elongation step of transcription and/or 3'-end processing is prevented. Inhibition of host transcription machinery leads to shut off of host cell protein synthesis and inhibition of the host innate immune response. NSs also seems to be involved in the nuclear relocalization of host PABP1. The chain is Non-structural protein NS-S (N) from Culex.